A 432-amino-acid polypeptide reads, in one-letter code: uncharacterized protein (432 aa).

This sequence to M.jannaschii MJ0977.

This is an uncharacterized protein from Methanocaldococcus jannaschii (strain ATCC 43067 / DSM 2661 / JAL-1 / JCM 10045 / NBRC 100440) (Methanococcus jannaschii).